A 421-amino-acid polypeptide reads, in one-letter code: Nuclear speckle RNA-binding protein B (421 aa).

Disordered regions lie at residues 1-64 (MDNR…VNIY), 86-114 (TGQT…MVDT), and 197-226 (TDPQ…GIPH). The segment covering 33–44 (PLAPPHPQPQPP) has biased composition (pro residues). The span at 89 to 103 (TSTSTTSSSSSSSTS) shows a compositional bias: low complexity. The RRM domain maps to 323–409 (NTLYVEGLPS…KILRLQFFRN (87 aa)).

Isoform 1: Expressed in root meristems, lateral root primordia, root vascular tissues and cotyledon vascular tissues. Isoform 2: Expressed in root meristems, lateral root primordia and root vascular tissues.

The protein localises to the nucleus speckle. Functionally, alternative splicing (AS) regulator that binds to specific mRNAs and modulates auxin effects on the transcriptome. Displaced from its targets upon binding to AS competitor long non-coding RNA (ASCO-RNA). This chain is Nuclear speckle RNA-binding protein B, found in Arabidopsis thaliana (Mouse-ear cress).